The primary structure comprises 647 residues: TNFAIP3-interacting protein 1 (647 aa).

Positions 39-72 form a coiled coil; sequence MQGIKMLGELLEESQMEASRLRQKAEELVKDSEL. The span at 61–71 shows a compositional bias: basic and acidic residues; that stretch reads QKAEELVKDSE. Positions 61 to 168 are disordered; that stretch reads QKAEELVKDS…DLGPPPPEDS (108 aa). Ser-77 carries the post-translational modification Phosphoserine. An interaction with Nef region spans residues 95–425; sequence TKVQVHPATS…SPLTRQREYQ (331 aa). Residues 102 to 115 show a composition bias toward low complexity; that stretch reads ATSTAATTTATATT. A compositionally biased stretch (polar residues) spans 143–155; it reads EEQNSPETGSHPT. The stretch at 209–270 forms a coiled coil; the sequence is SKVHKNEQRT…KKLLMNSSCK (62 aa). Ser-297, Ser-416, and Ser-455 each carry phosphoserine. Residues 311 to 551 adopt a coiled-coil conformation; sequence AAEKKVKLLE…KASGERYHME (241 aa). The segment at 444–601 is required for inhibitory activity of TNF-induced NF-kappa-B activation; sequence ASPSSPPAAF…MEHPPPHPNS (158 aa). Residues 465–523 are ubiquitin-binding domain (UBD); it reads KQELVTQNELLKQQVKIFEEDFQRERSDRERMNEEKEELKKQVEKLQAQVTLTNAQLKT. The Nuclear localization signal signature appears at 537 to 543; the sequence is QKRKAKA. Tyr-565 bears the Phosphotyrosine mark. Residue Arg-584 is modified to Asymmetric dimethylarginine. Arg-612 bears the Asymmetric dimethylarginine; alternate mark. Arg-612 bears the Omega-N-methylarginine; alternate mark. Residues 613-647 are disordered; that stretch reads PPCAGIRNQSSQVMDPPPDRPAEPESADNDCDGPQ. Over residues 637 to 647 the composition is skewed to acidic residues; the sequence is ESADNDCDGPQ. The residue at position 638 (Ser-638) is a Phosphoserine.

Interacts with TNFAIP3 and IKBKG (polyubiquitinated); facilitates TNFAIP3-mediated de-ubiquitination of NEMO/IKBKG. Interacts with polyubiquitin. Interacts with MAPK1, SELPLG and PIK3CD. Interacts with IRAK1 (polyubiquitinated). Interacts with MYD88; the interaction is indicative for participation in an activated TLR-signaling complex. Interacts with TAX1BP1. In terms of processing, phosphorylation at Tyr-565 by SRC-family kinases recruits phosphoinositide-3-kinase (PI3K) PIK3CD:p85 heterodimer which results in integrin activation and leukocyte adhesion to activated endothelium during inflammation. Ubiquitous. Abundant in heart and skeletal muscle and expressed at lower levels in thymus, liver, kidney, brain and intestinal tract.

The protein localises to the cytoplasm. It localises to the nucleus. Functionally, inhibits NF-kappa-B activation and TNF-induced NF-kappa-B-dependent gene expression by regulating TAX1BP1 and A20/TNFAIP3-mediated deubiquitination of IKBKG; proposed to link A20/TNFAIP3 to ubiquitinated IKBKG. Involved in regulation of EGF-induced ERK1/ERK2 signaling pathway; blocks MAPK3/MAPK1 nuclear translocation and MAPK1-dependent transcription. Increases cell surface CD4(T4) antigen expression. Involved in the anti-inflammatory response of macrophages and positively regulates TLR-induced activation of CEBPB. Involved in the prevention of autoimmunity; this function implicates binding to polyubiquitin. Involved in leukocyte integrin activation during inflammation; this function is mediated by association with SELPLG and dependent on phosphorylation by SRC-family kinases. The chain is TNFAIP3-interacting protein 1 (Tnip1) from Mus musculus (Mouse).